A 1693-amino-acid chain; its full sequence is Putative stoned B-like protein (1693 aa).

The segment covering 1–12 (MSWRDRDFDPHG) has biased composition (basic and acidic residues). 7 disordered regions span residues 1 to 54 (MSWR…ELPA), 222 to 322 (NQIP…VEKS), 334 to 371 (TVEITSPDAPHQGAFHDNTPKEPKVVEEEEDDDLPTFS), 383 to 438 (KEMT…DPNA), 585 to 807 (GDYH…TSAA), 841 to 869 (KKMEKLQKKKLKQQGKKAATPTLEPDEED), and 899 to 1024 (PVKE…FVAD). The span at 26 to 39 (SSSERAASMRAMRS) shows a compositional bias: low complexity. Composition is skewed to basic and acidic residues over residues 279 to 301 (MEDKMEQAEEKARKEEKKEKEET) and 311 to 322 (TTEKHQNEVEKS). Residues 360–371 (EEEEDDDLPTFS) are compositionally biased toward acidic residues. The segment covering 393–412 (ENVENEKQEDTHISEGHVEY) has biased composition (basic and acidic residues). Positions 596-615 (DENSTSAISGYEQNGASTSL) are enriched in polar residues. A compositionally biased stretch (low complexity) spans 632–643 (YYQGQEYQQEYY). Residues 684–686 (DPF) carry the DPF 1 motif. Residues 708–722 (SPTPEASSSTGTSAP) show a composition bias toward low complexity. A compositionally biased stretch (pro residues) spans 745 to 760 (PPRPPPAARPPPPRPA). The span at 786–807 (KVSTAVKSTESTLKNLEETSAA) shows a compositional bias: polar residues. Positions 899-913 (PVKEIKKAPEIRRVD) are enriched in basic and acidic residues. 3 short sequence motifs (DPF) span residues 1006-1008 (DPF), 1024-1026 (DPF), and 1039-1041 (DPF). Residues 1062–1095 (ANAENEDDFYNGRQSPTLSTPTPEGGSPISQQRP) form a disordered region. The segment covering 1073–1095 (GRQSPTLSTPTPEGGSPISQQRP) has biased composition (polar residues). One can recognise an SHD domain in the interval 1136 to 1283 (GWDLMVRHPI…KCKITRTAKP (148 aa)). The MHD domain occupies 1287–1606 (QDEVQIHCYD…AKYQYKVEID (320 aa)). The segment at 1633 to 1693 (ELHQPTFNPS…IQIDMKNYGY (61 aa)) is disordered. Polar residues predominate over residues 1637-1651 (PTFNPSTQESDTQQG).

Belongs to the Stoned B family.

The protein resides in the cytoplasm. In terms of biological role, potential adapter protein, which may be involved in endocytic vesicle recycling of synaptic vesicles. This chain is Putative stoned B-like protein (unc-41), found in Caenorhabditis elegans.